The chain runs to 793 residues: Ribosome biogenesis protein BOP1 homolog (793 aa).

The span at 1–11 (MTKKLTLKRKG) shows a compositional bias: basic residues. Residues 1-168 (MTKKLTLKRK…DSDTSDEEDI (168 aa)) form a disordered region. Composition is skewed to acidic residues over residues 44–53 (EDTTDDEGID), 60–72 (SSEDLEFESDEEG), and 83–116 (SSEEEDDDGDEEGEEEDEEEDDSEDGESADDGDE). A compositionally biased stretch (basic and acidic residues) spans 117 to 129 (EKPTTSKQNKSED). Over residues 133–143 (SSKVSKKTQPP) the composition is skewed to polar residues. Positions 146–161 (DLVKRDPSHPEYHDSD) are enriched in basic and acidic residues. 7 WD repeats span residues 454-495 (GHTD…RTIE), 497-535 (EDVVRCVAWCPNAKLSIIAVATGNRLLLINPKVGDKVLV), 579-621 (NHFK…SQIP), 624-662 (KSKGLIQCVLFHPVKPCFFVATQHNIRIYDLVKQELVKK), 665-704 (TNSKWISGMSIHPKGDNLLVSTYDKKMLWFDLDLSTKPYQ), 708-747 (LHRNAVRSVAFHLRYPLFASGSDDQAVIVSHGMVYNDLLQ), and 763-793 (REDFGVLDVNWHPIQPWIFSTGADCTIRLYT).

It belongs to the WD repeat BOP1/ERB1 family.

It localises to the nucleus. Its subcellular location is the nucleolus. It is found in the nucleoplasm. In terms of biological role, required for maturation of ribosomal RNAs and formation of the large ribosomal subunit. The protein is Ribosome biogenesis protein BOP1 homolog of Drosophila ananassae (Fruit fly).